We begin with the raw amino-acid sequence, 362 residues long: Porin Omp2b (362 aa).

The signal sequence occupies residues 1 to 22 (MNIKSLLLGSAAALVAASGAQA).

This sequence belongs to the alphaproteobacteria porin family. In terms of assembly, homotrimer.

It is found in the cell outer membrane. Forms passive diffusion pores that allow small molecular weight hydrophilic materials across the outer membrane. The protein is Porin Omp2b (omp2b) of Brucella neotomae.